Here is a 67-residue protein sequence, read N- to C-terminus: Large ribosomal subunit protein uL29 (67 aa).

Belongs to the universal ribosomal protein uL29 family.

The sequence is that of Large ribosomal subunit protein uL29 from Desulfitobacterium hafniense (strain Y51).